Reading from the N-terminus, the 43-residue chain is Alpha-conotoxin-like Leo-A1 (43 aa).

Positions 1-26 (LTLDRASDDTDVAAEIMSGLIALAID) are excised as a propeptide. Disulfide bonds link cysteine 28–cysteine 34 and cysteine 29–cysteine 42. Residues 30–32 (SDS) form a lacks the Ser-Xaa-Pro motif that is crucial for potent interaction with nAChR region.

It belongs to the conotoxin A superfamily. In terms of tissue distribution, expressed by the venom duct.

It localises to the secreted. Its function is as follows. Alpha-conotoxins act on postsynaptic membranes, they bind to the nicotinic acetylcholine receptors (nAChR) and thus inhibit them. Has possibly a distinct nAChR binding mode from other alpha-conotoxins, due to a different three residue motif (lacks the Ser-Xaa-Pro motif). In Conus leopardus (Leopard cone), this protein is Alpha-conotoxin-like Leo-A1.